The following is a 204-amino-acid chain: Superoxide dismutase [Mn] (204 aa).

Residue His-27 coordinates Mn(2+). A phosphothreonine mark is found at Thr-34 and Thr-70. Positions 82, 164, and 168 each coordinate Mn(2+).

It belongs to the iron/manganese superoxide dismutase family. In terms of assembly, homodimer. The cofactor is Mn(2+).

It carries out the reaction 2 superoxide + 2 H(+) = H2O2 + O2. Destroys superoxide anion radicals which are normally produced within the cells and which are toxic to biological systems. In Bacillus caldotenax, this protein is Superoxide dismutase [Mn] (sodA).